We begin with the raw amino-acid sequence, 391 residues long: Tryptophan synthase beta chain (391 aa).

An N6-(pyridoxal phosphate)lysine modification is found at K86.

Belongs to the TrpB family. Tetramer of two alpha and two beta chains. Pyridoxal 5'-phosphate serves as cofactor.

The enzyme catalyses (1S,2R)-1-C-(indol-3-yl)glycerol 3-phosphate + L-serine = D-glyceraldehyde 3-phosphate + L-tryptophan + H2O. It functions in the pathway amino-acid biosynthesis; L-tryptophan biosynthesis; L-tryptophan from chorismate: step 5/5. The beta subunit is responsible for the synthesis of L-tryptophan from indole and L-serine. The protein is Tryptophan synthase beta chain of Vibrio metschnikovii.